A 482-amino-acid polypeptide reads, in one-letter code: Alanine aminotransferase 2 (482 aa).

Position 299 is an N6-(pyridoxal phosphate)lysine (Lys-299).

Belongs to the class-I pyridoxal-phosphate-dependent aminotransferase family. Alanine aminotransferase subfamily. As to quaternary structure, homodimer. Pyridoxal 5'-phosphate is required as a cofactor.

The catalysed reaction is L-alanine + 2-oxoglutarate = pyruvate + L-glutamate. The protein operates within photosynthesis; C4 acid pathway. Its pathway is amino-acid degradation; L-alanine degradation via transaminase pathway; pyruvate from L-alanine: step 1/1. In terms of biological role, transfer of C3 units between the cytosol of mesophyll and bundle sheath cells to maintain a nitrogen-carbon balance in the C4-dicarboxylic pathway. This chain is Alanine aminotransferase 2, found in Hordeum vulgare (Barley).